The sequence spans 450 residues: MLVTAYLSFVGLLASCLGLELSRCRARPPGRACSNPSFLQFQLDFYQVYFLALAADWLQAPYLYKLYQHYHFLEGQIAILYVCGLASTVLFGLVASSLVDWLGRKKSCVLFSLTYSLCCITKLSQDYFVLLVGRALGGLSTALLFSAFEAWYIHEHVERHDFPAEWIPATFARAAFWNHVLAVAAGVAAEAVASWIGLGPVAPFVAAIPLLALTGALALRNWGENYDRQRAFSKTCAGGLRCLLSDRRVLLLGVIQALFESVIFIFVFLWTPVLDPHGAPLGIVFSSFMAASLLGSSLYRIATSKRYHLQPMHLLSLAVLIVVFSLFMLTFSTSPGQENPVESFIAFLLIELACGLYFPSMSFLRRKVIPETEQAGVLNWFRVPLHLLACLGLLVLHDSDRKTGTRNMFSICSAVMVTTLLAVAGLFTVVRHDAELRVPSPTGEPYAPEL.

Transmembrane regions (helical) follow at residues 1–21 (MLVT…GLEL), 38–58 (FLQF…ADWL), 79–99 (ILYV…SSLV), 128–148 (FVLL…FSAF), 167–187 (IPAT…AAGV), 191–211 (AVAS…IPLL), 249–269 (VLLL…FVFL), 278–298 (GAPL…GSSL), 311–331 (PMHL…MLTF), 344–364 (FIAF…MSFL), 376–396 (GVLN…LLVL), and 409–429 (FSIC…LFTV).

This sequence belongs to the major facilitator superfamily.

The protein resides in the cell membrane. In terms of biological role, mediates high-affinity intracellular uptake of the rare oligo-element molybdenum. This is Molybdate-anion transporter (Mfsd5) from Mus musculus (Mouse).